The primary structure comprises 56 residues: Small ribosomal subunit protein uS14 (56 aa).

Zn(2+) contacts are provided by C21, C24, C39, and C42.

Belongs to the universal ribosomal protein uS14 family. Component of the 40S small ribosomal subunit. It depends on Zn(2+) as a cofactor.

Its subcellular location is the cytoplasm. The protein resides in the cytosol. It localises to the rough endoplasmic reticulum. The chain is Small ribosomal subunit protein uS14 (RpS29) from Scarabaeus laticollis (Scarab dung beetle).